The sequence spans 563 residues: Cytochrome P450 monooxygenase phqL (563 aa).

A run of 3 helical transmembrane segments spans residues 20–40, 52–72, and 80–100; these read ENFS…IIIF, IPVG…FVPG, and ALWL…VSIL. A glycan (N-linked (GlcNAc...) asparagine) is linked at Asn-279. The helical transmembrane segment at 362–382 threads the bilayer; the sequence is LVIFAGSGTVAVTIIGCLYFL. Asn-419 is a glycosylation site (N-linked (GlcNAc...) asparagine). A heme-binding site is contributed by Cys-502.

Belongs to the cytochrome P450 family. It depends on heme as a cofactor.

It localises to the membrane. The protein operates within alkaloid biosynthesis. Cytochrome P450 monooxygenase; part of the gene cluster that mediates the biosynthesis of paraherquamide, a fungal indole alkaloid that belongs to a family of natural products containing a characteristic bicyclo[2.2.2]diazaoctane core. The first steps in the biosynthesis of paraherquamide is the production of the beta-methyl-proline precursor from L-isoleucine. They require oxidation of a terminally hydroxylated L-isoleucine to the corresponding aldehyde by enzymes which have still to be identified. Spontaneous cyclization and dehydration would yield the 4-methyl pyrolline-5-carboxylic acid, which is then reduced by the pyrroline-5-carboxylate reductase phqD leading to the beta-methyl-proline precursor. The next step of paraherquamide biosynthesis involves coupling of beta-methyl-proline and L-tryptophan by the bimodular NRPS phqB, to produce a monooxopiperazine intermediate. The reductase (R) domain of phqB utilizes NADPH for hydride transfer to reduce the thioester bond of the T domain-tethered linear dipeptide to a hemithioaminal intermediate, which spontaneously cleaves the C-S bond to release the aldehyde product. This compound undergoes spontaneous cyclization and dehydration to give a dienamine which is reverse prenylated at C-2 by the reverse prenyltransferase phqJ. The other prenyltransferase present in the cluster, phqI may be a redundant gene in the pathway. During biosynthetic assembly, the key step to produce the polycyclic core is catalyzed by the bifunctional reductase and intramolecular [4+2] Diels-Alderase, phqE, resulting in formation of the [2.2.2] diazaoctane intermediate preparaherquamide. Following formation of preparaherquamide, an indole 2,3-epoxidation-initiated pinacol-like rearrangement is catalyzed by the phqK FAD-dependent monooxygenase. The prenyltransferase phqA, the cytochrome P450 monooxygenase phqL, and the FAD-linked oxidoreductase phqH (or the cytochrome P450 monooxygenase phqM), are proposed to be involved in the formation of the pyran ring. The FAD-dependent monooxygenase phqK is likely responsible for generation of the spiro-oxindole, and the N-methylation is likely mediated by the phqN methyltransferase leading to the isolable natural product paraherquamide F. However, the order of these biosynthetic steps has still to be determined. In late-stage paraherquamide biosynthesis, the third P450 monooxygenase, phqO, is probably responsible for the C-14 hydroxylation, transforming paraherquamide F to paraherquamide G, and paraherquamide E to the final product paraherquamide A. The expansion from the 6-membered ring pyran (in paraherquamides F and G) to the 7-membered dioxepin ring (in paraherquamides A and E) represents a poorly understood but intriguing process that probably involves the 2-oxoglutarate-dependent dioxygenase phqC. Finally, the remaining members of the paraherquamide cluster, including phqI as well as phqM (or phqH), do not have a clearly prescribed role and appear to be redundant. This Penicillium fellutanum protein is Cytochrome P450 monooxygenase phqL.